A 668-amino-acid polypeptide reads, in one-letter code: Fructose-1,6-bisphosphatase class 3 (668 aa).

The protein belongs to the FBPase class 3 family. The cofactor is Mn(2+).

The catalysed reaction is beta-D-fructose 1,6-bisphosphate + H2O = beta-D-fructose 6-phosphate + phosphate. Its pathway is carbohydrate biosynthesis; gluconeogenesis. This is Fructose-1,6-bisphosphatase class 3 from Clostridium botulinum (strain Kyoto / Type A2).